A 49-amino-acid chain; its full sequence is Osteocalcin (49 aa).

The Gla domain occupies 1 to 47 (YLDSGLGAPVPYPDPLEPKREVCELNPNCDELADHIGFQEAYQRFYG). Positions 17, 21, 24, and 30 each coordinate Ca(2+). Glutamate 17, glutamate 21, and glutamate 24 each carry 4-carboxyglutamate. Cysteines 23 and 29 form a disulfide.

Belongs to the osteocalcin/matrix Gla protein family. Gamma-carboxyglutamate residues are formed by vitamin K dependent carboxylation by GGCX. These residues are essential for the binding of calcium. Decarboxylation promotes the hormone activity.

It localises to the secreted. In terms of biological role, the carboxylated form is one of the main organic components of the bone matrix, which constitutes 1-2% of the total bone protein. It acts as a negative regulator of bone formation and is required to limit bone formation without impairing bone resorption or mineralization. The carboxylated form binds strongly to apatite and calcium. Its function is as follows. The uncarboxylated form acts as a hormone secreted by osteoblasts, which regulates different cellular processes, such as energy metabolism, male fertility and brain development. Regulates of energy metabolism by acting as a hormone favoring pancreatic beta-cell proliferation, insulin secretion and sensitivity and energy expenditure. Uncarboxylated osteocalcin hormone also promotes testosterone production in the testes: acts as a ligand for G protein-coupled receptor GPRC6A at the surface of Leydig cells, initiating a signaling response that promotes the expression of enzymes required for testosterone synthesis in a CREB-dependent manner. Also acts as a regulator of brain development: osteocalcin hormone crosses the blood-brain barrier and acts as a ligand for GPR158 on neurons, initiating a signaling response that prevents neuronal apoptosis in the hippocampus, favors the synthesis of all monoamine neurotransmitters and inhibits that of gamma-aminobutyric acid (GABA). Osteocalcin also crosses the placenta during pregnancy and maternal osteocalcin is required for fetal brain development. The sequence is that of Osteocalcin (BGLAP) from Canis lupus familiaris (Dog).